We begin with the raw amino-acid sequence, 142 residues long: Large ribosomal subunit protein uL11 (142 aa).

The protein belongs to the universal ribosomal protein uL11 family. Part of the ribosomal stalk of the 50S ribosomal subunit. Interacts with L10 and the large rRNA to form the base of the stalk. L10 forms an elongated spine to which L12 dimers bind in a sequential fashion forming a multimeric L10(L12)X complex. Post-translationally, one or more lysine residues are methylated.

Functionally, forms part of the ribosomal stalk which helps the ribosome interact with GTP-bound translation factors. In Beijerinckia indica subsp. indica (strain ATCC 9039 / DSM 1715 / NCIMB 8712), this protein is Large ribosomal subunit protein uL11.